A 371-amino-acid chain; its full sequence is Poly(rC)-binding protein 3 (371 aa).

3 consecutive KH domains span residues Thr45–Gly95, Pro129–Gly182, and Ala293–Ile357.

Widely expressed, with highest levels in testis and fat tissues and lowest in heart.

It is found in the cytoplasm. In terms of biological role, single-stranded nucleic acid binding protein that binds preferentially to oligo dC. In Mus musculus (Mouse), this protein is Poly(rC)-binding protein 3 (Pcbp3).